Consider the following 585-residue polypeptide: MFRTHTCGELRISDVNKQVKLSGWVQRSRKMGGMTFVDLRDRYGITQLVFNEEIDAELCERANKLGREFVIQIVGTVNERFSKNSHIPTGDIEIIVSELNILNSAITPPFTIEDNTDGGDDIRMKYRYLDLRRSAVRSNLELRHKMTIEVRSYLDKLGFLEVETPVLIGSTPEGARDFVVPSRMNPGQFYALPQSPQTLKQLLMVSGFDRYFQIAKCFRDEDLRADRQPEFTQIDCEMSFVEQEDVITTFEGMAKHLFKVIRNIELTEPFPRMPWSEAMRLYGSDKPDIRFGMQFVELMDILKGHGFSVFDNATYIGGICAEGAAGYTRKQLDALTEFVKKPQIGAKGMVYARIEADGTVKSSVDKFYTQEVLQQLKEAFGAKPGDLILILSGDDAMKTRKQLCELRLEMGNQLGLRDKNTFACLWVVDFPLFEWSEEEGRLMAMHHPFTSPKPEDIHLLDTNPAAVRANAYDMVINGVEVGGGSIRIHDSQLQNKMFELLGFTPERAQEQFGFLMNAFKFGAPPHGGLAYGLDRWVSLFAGLDSIRDCIAFPKNNSGRDVMLDAPAALDPSQLEELNLIVDIKE.

L-aspartate is bound at residue glutamate 173. The interval 197-200 (QTLK) is aspartate. Arginine 219 contacts L-aspartate. ATP-binding positions include 219-221 (RDE) and glutamine 228. L-aspartate is bound at residue histidine 446. Glutamate 480 is an ATP binding site. Arginine 487 serves as a coordination point for L-aspartate. 532 to 535 (GLDR) is an ATP binding site.

This sequence belongs to the class-II aminoacyl-tRNA synthetase family. Type 1 subfamily. In terms of assembly, homodimer.

Its subcellular location is the cytoplasm. It catalyses the reaction tRNA(Asp) + L-aspartate + ATP = L-aspartyl-tRNA(Asp) + AMP + diphosphate. Its function is as follows. Catalyzes the attachment of L-aspartate to tRNA(Asp) in a two-step reaction: L-aspartate is first activated by ATP to form Asp-AMP and then transferred to the acceptor end of tRNA(Asp). The chain is Aspartate--tRNA ligase from Bacteroides fragilis (strain ATCC 25285 / DSM 2151 / CCUG 4856 / JCM 11019 / LMG 10263 / NCTC 9343 / Onslow / VPI 2553 / EN-2).